We begin with the raw amino-acid sequence, 69 residues long: MAKIKGQVKWFNESKGFGFITPSDGSKDVFVHFSSIQGNGFKTLTEGQNVEFEIQDGQKGPAAVNVFSL.

Residues 6–66 enclose the CSD domain; that stretch reads GQVKWFNESK…GQKGPAAVNV (61 aa).

It localises to the cytoplasm. The chain is Cold shock-like protein CspC (cspC) from Buchnera aphidicola subsp. Acyrthosiphon pisum (strain APS) (Acyrthosiphon pisum symbiotic bacterium).